The chain runs to 414 residues: Glutamyl-tRNA reductase (414 aa).

Residues 49-52 (TCNR), S108, 113-115 (EPQ), and Q119 contribute to the substrate site. The active-site Nucleophile is the C50. Position 188 to 193 (188 to 193 (GAGQTG)) interacts with NADP(+).

It belongs to the glutamyl-tRNA reductase family. Homodimer.

It carries out the reaction (S)-4-amino-5-oxopentanoate + tRNA(Glu) + NADP(+) = L-glutamyl-tRNA(Glu) + NADPH + H(+). Its pathway is porphyrin-containing compound metabolism; protoporphyrin-IX biosynthesis; 5-aminolevulinate from L-glutamyl-tRNA(Glu): step 1/2. Catalyzes the NADPH-dependent reduction of glutamyl-tRNA(Glu) to glutamate 1-semialdehyde (GSA). The protein is Glutamyl-tRNA reductase of Francisella tularensis subsp. holarctica (strain LVS).